A 148-amino-acid chain; its full sequence is Transcriptional regulator MraZ (148 aa).

2 SpoVT-AbrB domains span residues 5–51 and 80–123; these read STQL…PQPV and ASDV…DMAK.

It belongs to the MraZ family. In terms of assembly, forms oligomers.

It localises to the cytoplasm. The protein localises to the nucleoid. In Nitrosomonas europaea (strain ATCC 19718 / CIP 103999 / KCTC 2705 / NBRC 14298), this protein is Transcriptional regulator MraZ.